The following is a 1267-amino-acid chain: Clustered mitochondria protein homolog (1267 aa).

7 TPR repeats span residues 64–102 (YNLK…KPYN), 420–453 (YSFV…LNML), 716–749 (EAHE…MIKE), 795–830 (LVPL…IPAL), 904–939 (RSIC…KSRA), 1010–1043 (AEKY…YERV), and 1138–1171 (AYIK…FTKE). One can recognise a Clu domain in the interval 329 to 586 (PTNGPDYLRT…NTYPLDVEFA (258 aa)). Positions 1203–1219 (QQDQTAASGLKQQPQKS) are enriched in polar residues. Residues 1203-1267 (QQDQTAASGL…KSKSKGKNKK (65 aa)) form a disordered region. Residues 1224-1239 (NKKETTNPDLADKSVD) show a composition bias toward basic and acidic residues. Positions 1254–1267 (KTTKKSKSKGKNKK) are enriched in basic residues.

The protein belongs to the CLU family. May associate with the eukaryotic translation initiation factor 3 (eIF-3) complex.

It is found in the cytoplasm. In terms of biological role, mRNA-binding protein involved in proper cytoplasmic distribution of mitochondria. In Candida glabrata (strain ATCC 2001 / BCRC 20586 / JCM 3761 / NBRC 0622 / NRRL Y-65 / CBS 138) (Yeast), this protein is Clustered mitochondria protein homolog.